Here is an 813-residue protein sequence, read N- to C-terminus: Ribosome-releasing factor 2, mitochondrial (813 aa).

A mitochondrion-targeting transit peptide spans 1-20; it reads MLRIVWKPLKIRLPVWRRYQ. A tr-type G domain is found at 26–314; that stretch reads NSIRNVGIIA…AIIDYLPSPV (289 aa). GTP-binding positions include 35–42, 99–103, and 153–156; these read AHIDAGKT, DTPGH, and NKMD.

This sequence belongs to the TRAFAC class translation factor GTPase superfamily. Classic translation factor GTPase family. EF-G/EF-2 subfamily.

It localises to the mitochondrion. Functionally, mitochondrial GTPase that mediates the disassembly of ribosomes from messenger RNA at the termination of mitochondrial protein biosynthesis. Not involved in the GTP-dependent ribosomal translocation step during translation elongation. The chain is Ribosome-releasing factor 2, mitochondrial (mef2) from Schizosaccharomyces pombe (strain 972 / ATCC 24843) (Fission yeast).